A 244-amino-acid polypeptide reads, in one-letter code: Small ribosomal subunit protein uS3 (244 aa).

In terms of domain architecture, KH type-2 spans 39 to 107; that stretch reads IRELIKKESF…KLIINVEEIK (69 aa). Residues 216-244 are disordered; that stretch reads LPVYKNKKNDKNKKRRNNNRKGKSQAAKN. A compositionally biased stretch (basic residues) spans 220–238; that stretch reads KNKKNDKNKKRRNNNRKGK.

It belongs to the universal ribosomal protein uS3 family. Part of the 30S ribosomal subunit. Forms a tight complex with proteins S10 and S14.

Its function is as follows. Binds the lower part of the 30S subunit head. Binds mRNA in the 70S ribosome, positioning it for translation. The sequence is that of Small ribosomal subunit protein uS3 from Finegoldia magna (strain ATCC 29328 / DSM 20472 / WAL 2508) (Peptostreptococcus magnus).